We begin with the raw amino-acid sequence, 749 residues long: MGLLRLVFLLSWAASAGGLYGNPLNKYIRHYEGLSYNVDSLHQKHQRAKRAVSQEDQFVHLDFQAHGRQFNLRMKKDTSLFSPDFKLEVGGETVNYDTSHIYTGQLFGEQGTLSHGSVVDGKSKGLLKPLKAHSYVEPSERFFKDQAVPFHSVMYHEDDIKYPHKYGSEGGCADSSVFKRMKEYQMSVQEEPEKHDHKEDHEDSGPVILRKKRAAQAEKNTCQLFIQTDHLFYKRYGETREAVIAQISSHVKAIDTIYQSTDFSGIRNISFMVKRIRINVTSDEKDPTNPFRFPNIGVEKFLELNSEQNHDDYCLAYVFTDRDFDDGVLGLAWVGAPSGSSGGICERNKLYSDGKKKSLNTGIITVQNYGSHVPPKVSHITFAHEVGHNFGSPHDSGNECTPGEAKNLGFKENGNFIMYARTTSGDKLNNNKFSICSVRNISQVLDKKENSCFVESGQPICGNGLVEPGEQCDCGYSDQCKDECCYDANQPENLKCTLKPGKQCSPSQGPCCTTDCTFKRASENCREESDCAKMGTCNGNSAQCPPSEPRENLTECNRATQVCIKGQCSGSICERYDLEECTCGSTDEKDDKELCHVCCMEKMKPHTCASTGSEAWKAYFKGKTITLQPGSPCNEFKGYCDVFMRCRLVDADGPLARLKKAIFNPELYENIAEWIVAHWWAVLLMGIALIMLMAGFIKICSVHTPSSNPKLPPPKPLPGTLKRRRPPQTTQQPSRQRPRENYQMGHMRH.

The N-terminal stretch at 1 to 18 (MGLLRLVFLLSWAASAGG) is a signal peptide. Residues 19–213 (LYGNPLNKYI…SGPVILRKKR (195 aa)) constitute a propeptide that is removed on maturation. The Extracellular segment spans residues 19–673 (LYGNPLNKYI…NPELYENIAE (655 aa)). Residues 170-177 (GGCADSSV) carry the Cysteine switch motif. Cys-172 is a binding site for Zn(2+). The region spanning 220 to 457 (NTCQLFIQTD…KENSCFVESG (238 aa)) is the Peptidase M12B domain. Intrachain disulfides connect Cys-222-Cys-314, Cys-345-Cys-452, Cys-400-Cys-436, Cys-461-Cys-496, Cys-472-Cys-485, Cys-474-Cys-480, Cys-484-Cys-516, Cys-504-Cys-512, Cys-511-Cys-537, Cys-525-Cys-544, Cys-531-Cys-563, Cys-556-Cys-568, Cys-573-Cys-599, Cys-581-Cys-608, Cys-583-Cys-598, Cys-595-Cys-640, and Cys-633-Cys-646. Residues Asn-268 and Asn-279 are each glycosylated (N-linked (GlcNAc...) asparagine). Residue His-384 coordinates Zn(2+). Glu-385 is a catalytic residue. The Zn(2+) site is built by His-388 and His-394. Asn-440 carries an N-linked (GlcNAc...) asparagine glycan. The Disintegrin domain occupies 458 to 552 (QPICGNGLVE…QCPPSEPREN (95 aa)). Residue Asn-552 is glycosylated (N-linked (GlcNAc...) asparagine). The helical transmembrane segment at 674 to 694 (WIVAHWWAVLLMGIALIMLMA) threads the bilayer. Residues 695–749 (GFIKICSVHTPSSNPKLPPPKPLPGTLKRRRPPQTTQQPSRQRPRENYQMGHMRH) lie on the Cytoplasmic side of the membrane. The segment at 705-749 (PSSNPKLPPPKPLPGTLKRRRPPQTTQQPSRQRPRENYQMGHMRH) is disordered. Residues 709–716 (PKLPPPKP) carry the SH3-binding motif. The residue at position 720 (Thr-720) is a Phosphothreonine. The SH3-binding signature appears at 723–729 (RRRPPQT).

The cofactor is Zn(2+). Post-translationally, the precursor is cleaved by furin and PCSK7.

The protein localises to the membrane. It carries out the reaction Endopeptidase of broad specificity.. In terms of biological role, controls the proteolytic processing of Notch and mediates lateral inhibition during neurogenesis. This is Disintegrin and metalloproteinase domain-containing protein 10 (adam10) from Xenopus laevis (African clawed frog).